We begin with the raw amino-acid sequence, 227 residues long: ATP phosphoribosyltransferase (227 aa).

Belongs to the ATP phosphoribosyltransferase family. Short subfamily. As to quaternary structure, heteromultimer composed of HisG and HisZ subunits.

The protein localises to the cytoplasm. The catalysed reaction is 1-(5-phospho-beta-D-ribosyl)-ATP + diphosphate = 5-phospho-alpha-D-ribose 1-diphosphate + ATP. Its pathway is amino-acid biosynthesis; L-histidine biosynthesis; L-histidine from 5-phospho-alpha-D-ribose 1-diphosphate: step 1/9. Functionally, catalyzes the condensation of ATP and 5-phosphoribose 1-diphosphate to form N'-(5'-phosphoribosyl)-ATP (PR-ATP). Has a crucial role in the pathway because the rate of histidine biosynthesis seems to be controlled primarily by regulation of HisG enzymatic activity. This is ATP phosphoribosyltransferase from Rhodospirillum rubrum (strain ATCC 11170 / ATH 1.1.1 / DSM 467 / LMG 4362 / NCIMB 8255 / S1).